Consider the following 370-residue polypeptide: Uroporphyrinogen decarboxylase (370 aa).

Substrate contacts are provided by residues 29 to 33 (RQAGR), Asp79, Tyr155, Ser210, and His342.

The protein belongs to the uroporphyrinogen decarboxylase family. As to quaternary structure, homodimer.

The protein localises to the cytoplasm. The enzyme catalyses uroporphyrinogen III + 4 H(+) = coproporphyrinogen III + 4 CO2. It functions in the pathway porphyrin-containing compound metabolism; protoporphyrin-IX biosynthesis; coproporphyrinogen-III from 5-aminolevulinate: step 4/4. In terms of biological role, catalyzes the decarboxylation of four acetate groups of uroporphyrinogen-III to yield coproporphyrinogen-III. The protein is Uroporphyrinogen decarboxylase of Delftia acidovorans (strain DSM 14801 / SPH-1).